A 461-amino-acid polypeptide reads, in one-letter code: Methylenetetrahydrofolate--tRNA-(uracil-5-)-methyltransferase TrmFO (461 aa).

Position 16-21 (16-21 (GAGLAG)) interacts with FAD.

This sequence belongs to the MnmG family. TrmFO subfamily. FAD serves as cofactor.

It is found in the cytoplasm. It carries out the reaction uridine(54) in tRNA + (6R)-5,10-methylene-5,6,7,8-tetrahydrofolate + NADH + H(+) = 5-methyluridine(54) in tRNA + (6S)-5,6,7,8-tetrahydrofolate + NAD(+). The catalysed reaction is uridine(54) in tRNA + (6R)-5,10-methylene-5,6,7,8-tetrahydrofolate + NADPH + H(+) = 5-methyluridine(54) in tRNA + (6S)-5,6,7,8-tetrahydrofolate + NADP(+). Catalyzes the folate-dependent formation of 5-methyl-uridine at position 54 (M-5-U54) in all tRNAs. This chain is Methylenetetrahydrofolate--tRNA-(uracil-5-)-methyltransferase TrmFO, found in Parasynechococcus marenigrum (strain WH8102).